The chain runs to 391 residues: Heme A synthase (391 aa).

8 helical membrane-spanning segments follow: residues 37–57 (IRLW…VGGL), 121–141 (RQLG…FLVA), 152–172 (LLAL…MVAS), 186–206 (LAVH…QALL), 229–249 (TTVL…VAGI), 298–318 (FLHR…WIFG), 332–352 (LLAL…LSAA), and 354–374 (WQVA…ILHA). H300 contributes to the heme binding site. A heme-binding site is contributed by H360.

The protein belongs to the COX15/CtaA family. Type 2 subfamily. As to quaternary structure, interacts with CtaB. The cofactor is heme b.

The protein localises to the cell membrane. The enzyme catalyses Fe(II)-heme o + 2 A + H2O = Fe(II)-heme a + 2 AH2. It functions in the pathway porphyrin-containing compound metabolism; heme A biosynthesis; heme A from heme O: step 1/1. Functionally, catalyzes the conversion of heme O to heme A by two successive hydroxylations of the methyl group at C8. The first hydroxylation forms heme I, the second hydroxylation results in an unstable dihydroxymethyl group, which spontaneously dehydrates, resulting in the formyl group of heme A. This chain is Heme A synthase, found in Cereibacter sphaeroides (strain ATCC 17025 / ATH 2.4.3) (Rhodobacter sphaeroides).